Reading from the N-terminus, the 393-residue chain is Bifunctional enzyme Fae/Hps (393 aa).

Positions 1–161 (MYLVGEALIG…YEKDRAAHGI (161 aa)) are formaldehyde-activating enzyme. Histidine 17 functions as the Proton donor in the catalytic mechanism. Substrate contacts are provided by aspartate 19, leucine 48, lysine 66, threonine 68, and glutamine 83. The segment at 162-393 (MGFKVQRLWD…IDQFRIMTDF (232 aa)) is 3-hexulose-6-phosphate synthase.

The protein in the N-terminal section; belongs to the formaldehyde-activating enzyme family. This sequence in the C-terminal section; belongs to the HPS/KGPDC family. HPS subfamily.

It catalyses the reaction 5,6,7,8-tetrahydromethanopterin + formaldehyde = 5,10-methylenetetrahydromethanopterin + H2O. It carries out the reaction D-ribulose 5-phosphate + formaldehyde = D-arabino-hex-3-ulose 6-phosphate. It functions in the pathway carbohydrate biosynthesis; D-ribose 5-phosphate biosynthesis. Catalyzes the condensation of formaldehyde with tetrahydromethanopterin (H(4)MPT) to 5,10-methylenetetrahydromethanopterin. Its function is as follows. Catalyzes the reversible formation of ribulose-5-phosphate and formaldehyde from 3-hexulose-6-phosphate. The protein is Bifunctional enzyme Fae/Hps of Methanoregula boonei (strain DSM 21154 / JCM 14090 / 6A8).